Consider the following 362-residue polypeptide: Olfactory receptor 5AU1 (362 aa).

At Met-1–Phe-79 the chain is on the extracellular side. Asn-56 carries N-linked (GlcNAc...) asparagine glycosylation. Residues Val-80–Ile-100 traverse the membrane as a helical segment. Residues His-101–Ser-116 are Cytoplasmic-facing. A helical transmembrane segment spans residues Leu-117–Lys-139. Topologically, residues Arg-140–Thr-150 are extracellular. Residues Cys-148 and Cys-230 are joined by a disulfide bond. The chain crosses the membrane as a helical span at residues Gln-151–Tyr-171. Residues Asp-172–Ser-194 lie on the Cytoplasmic side of the membrane. A helical membrane pass occupies residues Leu-195 to Phe-215. The Extracellular portion of the chain corresponds to Ser-216 to Glu-247. A helical membrane pass occupies residues Ile-248 to Ser-268. The Cytoplasmic segment spans residues Tyr-269–Ser-290. A helical transmembrane segment spans residues Thr-291–Leu-311. Residues Arg-312–Asp-322 lie on the Extracellular side of the membrane. The helical transmembrane segment at Arg-323–Leu-343 threads the bilayer. The Cytoplasmic segment spans residues Arg-344–Glu-362.

The protein belongs to the G-protein coupled receptor 1 family.

It is found in the cell membrane. Its function is as follows. Odorant receptor. The chain is Olfactory receptor 5AU1 (OR5AU1) from Homo sapiens (Human).